Consider the following 1273-residue polypeptide: DNA-directed RNA polymerase subunit beta (1273 aa).

The interval 1252–1273 is disordered; it reads ADDQDLVVSSNDEEVSENDERS.

This sequence belongs to the RNA polymerase beta chain family. As to quaternary structure, the RNAP catalytic core consists of 2 alpha, 1 beta, 1 beta' and 1 omega subunit. When a sigma factor is associated with the core the holoenzyme is formed, which can initiate transcription.

The enzyme catalyses RNA(n) + a ribonucleoside 5'-triphosphate = RNA(n+1) + diphosphate. In terms of biological role, DNA-dependent RNA polymerase catalyzes the transcription of DNA into RNA using the four ribonucleoside triphosphates as substrates. The protein is DNA-directed RNA polymerase subunit beta of Dehalococcoides mccartyi (strain ATCC BAA-2100 / JCM 16839 / KCTC 5957 / BAV1).